Reading from the N-terminus, the 237-residue chain is Heme oxygenase (237 aa).

Histidine 17 is a binding site for heme b.

The protein belongs to the heme oxygenase family.

The protein localises to the plastid. Its subcellular location is the chloroplast. The catalysed reaction is heme b + 3 reduced [NADPH--hemoprotein reductase] + 3 O2 = biliverdin IXalpha + CO + Fe(2+) + 3 oxidized [NADPH--hemoprotein reductase] + 3 H2O + H(+). Its function is as follows. Catalyzes the opening of the heme ring with the release of iron. Key enzyme in the synthesis of the chromophoric part of the photosynthetic antennae. This chain is Heme oxygenase (pbsA), found in Guillardia theta (Cryptophyte).